Here is a 63-residue protein sequence, read N- to C-terminus: Large ribosomal subunit protein uL29 (63 aa).

Belongs to the universal ribosomal protein uL29 family.

The polypeptide is Large ribosomal subunit protein uL29 (Shigella flexneri).